Reading from the N-terminus, the 147-residue chain is Hemoglobin subunit epsilon (147 aa).

Residues 3-147 enclose the Globin domain; sequence HFTAEEKSTI…VATALAHKYH (145 aa). Phosphoserine occurs at positions 14 and 51. His-64 and His-93 together coordinate heme b.

The protein belongs to the globin family. Heterotetramer of two alpha chains and two epsilon chains in early embryonic hemoglobin Gower-2; two zeta chains and two epsilon chains in early embryonic hemoglobin Gower-1. As to expression, red blood cells.

In terms of biological role, the epsilon chain is a beta-type chain of early mammalian embryonic hemoglobin. The sequence is that of Hemoglobin subunit epsilon (HBE1) from Eulemur fulvus fulvus (Brown lemur).